Here is a 690-residue protein sequence, read N- to C-terminus: Calpain-9 (690 aa).

The tract at residues 1–24 is disordered; it reads MPYLYRAPGPQAHPVPKDARITHS. The Calpain catalytic domain maps to 42-337; that stretch reads LFEDADFPAS…FDKVEICNLT (296 aa). Ca(2+) is bound by residues Leu-81, Gly-83, and Asp-88. The active site involves Cys-97. Residue Glu-167 coordinates Ca(2+). Active-site residues include His-254 and Asn-278. Ca(2+) is bound by residues Glu-284, Asp-291, Leu-312, Asp-314, and Glu-316. The domain III stretch occupies residues 338 to 521; the sequence is PDALEEDAIH…PPDQETEEEQ (184 aa). Residues 498–519 are disordered; the sequence is GNVDIDLPEPPKPTPPDQETEE. EF-hand domains are found at residues 518 to 552, 561 to 589, and 591 to 626; these read EEEQ…VLQK, LSLI…FKVF, and DKLK…AGFQ. Residues 522–690 are domain IV; sequence RFRALFEQVA…NEFIHLTMNI (169 aa). Asp-574, Ser-576, Asn-578, Lys-580, Glu-585, Asp-604, Asp-606, Ser-608, Thr-610, and Glu-615 together coordinate Ca(2+).

It belongs to the peptidase C2 family. Expressed predominantly in stomach.

Its function is as follows. Calcium-regulated non-lysosomal thiol-protease. This Homo sapiens (Human) protein is Calpain-9 (CAPN9).